Consider the following 312-residue polypeptide: Ribosomal protein L11 methyltransferase (312 aa).

Positions 162, 183, 205, and 248 each coordinate S-adenosyl-L-methionine.

This sequence belongs to the methyltransferase superfamily. PrmA family.

It localises to the cytoplasm. It carries out the reaction L-lysyl-[protein] + 3 S-adenosyl-L-methionine = N(6),N(6),N(6)-trimethyl-L-lysyl-[protein] + 3 S-adenosyl-L-homocysteine + 3 H(+). In terms of biological role, methylates ribosomal protein L11. The sequence is that of Ribosomal protein L11 methyltransferase from Exiguobacterium sp. (strain ATCC BAA-1283 / AT1b).